The primary structure comprises 214 residues: Adenylate kinase (214 aa).

ATP is bound at residue 10–15; sequence GAGKGT. An NMP region spans residues 30-59; it reads STGDMLRAAIKAGTELGKQAKAVIDAGQLV. AMP is bound by residues Thr31, Arg36, 57–59, 85–88, and Gln92; these read QLV and GFPR. The segment at 122 to 159 is LID; that stretch reads GRRAHLPSGRTYHVVYNPPKVEGKDDVTGEDLVVRDDD. ATP is bound by residues Arg123 and 132 to 133; that span reads TY. Residues Arg156 and Arg167 each coordinate AMP. Lys200 provides a ligand contact to ATP.

It belongs to the adenylate kinase family. Monomer.

The protein localises to the cytoplasm. It carries out the reaction AMP + ATP = 2 ADP. The protein operates within purine metabolism; AMP biosynthesis via salvage pathway; AMP from ADP: step 1/1. In terms of biological role, catalyzes the reversible transfer of the terminal phosphate group between ATP and AMP. Plays an important role in cellular energy homeostasis and in adenine nucleotide metabolism. This chain is Adenylate kinase, found in Vibrio vulnificus (strain YJ016).